Consider the following 411-residue polypeptide: Acetate kinase (411 aa).

Position 7 (Asn-7) interacts with Mg(2+). Lys-14 contacts ATP. Position 94 (Arg-94) interacts with substrate. Asp-151 acts as the Proton donor/acceptor in catalysis. Residues 211–215 (HLGNG), 285–287 (DMR), and 333–337 (GIGEN) each bind ATP. Glu-387 serves as a coordination point for Mg(2+).

Belongs to the acetokinase family. As to quaternary structure, homodimer. Mg(2+) is required as a cofactor. Mn(2+) serves as cofactor.

The protein resides in the cytoplasm. The enzyme catalyses acetate + ATP = acetyl phosphate + ADP. The protein operates within metabolic intermediate biosynthesis; acetyl-CoA biosynthesis; acetyl-CoA from acetate: step 1/2. Functionally, catalyzes the formation of acetyl phosphate from acetate and ATP. Can also catalyze the reverse reaction. The sequence is that of Acetate kinase from Syntrophobacter fumaroxidans (strain DSM 10017 / MPOB).